Here is a 904-residue protein sequence, read N- to C-terminus: Dynamin-like protein C (904 aa).

Residues Ile-44–Leu-102 are a coiled coil. The disordered stretch occupies residues His-53–Ser-93. Residues Arg-67–Asp-90 are compositionally biased toward basic and acidic residues. The Dynamin-type G domain occupies Ser-119–Pro-441. The segment at Gly-129 to Ser-136 is G1 motif. GTP is bound at residue Gly-129–Ser-136. The G2 motif stretch occupies residues Gly-155–Arg-157. The segment at Ser-169 to Lys-227 is disordered. The segment covering Ser-183 to Ser-213 has biased composition (low complexity). The interval Asp-278–Gly-281 is G3 motif. GTP is bound by residues Asp-278–Phe-282 and Thr-343–Asp-346. A G4 motif region spans residues Thr-343–Asp-346. The tract at residues Leu-378–Lys-381 is G5 motif. Residues Glu-781 to Phe-811 are a coiled coil. Disordered stretches follow at residues Ser-821 to Ser-840 and Asn-853 to Asn-904. Over residues Asn-853–Ser-876 the composition is skewed to polar residues. Residues Asn-877 to Gln-891 are compositionally biased toward low complexity.

The protein belongs to the TRAFAC class dynamin-like GTPase superfamily. Dynamin/Fzo/YdjA family.

Its subcellular location is the cytoplasm. The catalysed reaction is GTP + H2O = GDP + phosphate + H(+). Involved in cytokinesis. May hydrolyze GTP. In Dictyostelium discoideum (Social amoeba), this protein is Dynamin-like protein C (dlpC).